Here is a 201-residue protein sequence, read N- to C-terminus: Protein TV1384 (201 aa).

An AMMECR1 domain is found at 11–200 (DIGAKAVMLA…EIEPNGKVEQ (190 aa)).

The sequence is that of Protein TV1384 from Thermoplasma volcanium (strain ATCC 51530 / DSM 4299 / JCM 9571 / NBRC 15438 / GSS1).